The following is a 283-amino-acid chain: Pantothenate synthetase (283 aa).

Position 30–37 (30–37 (MGALHEGH)) interacts with ATP. The active-site Proton donor is histidine 37. Glutamine 61 is a binding site for (R)-pantoate. Glutamine 61 contacts beta-alanine. An ATP-binding site is contributed by 147–150 (GEKD). Glutamine 153 serves as a coordination point for (R)-pantoate. Residues isoleucine 176 and 184-187 (VSSR) contribute to the ATP site.

Belongs to the pantothenate synthetase family. Homodimer.

Its subcellular location is the cytoplasm. The enzyme catalyses (R)-pantoate + beta-alanine + ATP = (R)-pantothenate + AMP + diphosphate + H(+). The protein operates within cofactor biosynthesis; (R)-pantothenate biosynthesis; (R)-pantothenate from (R)-pantoate and beta-alanine: step 1/1. Its function is as follows. Catalyzes the condensation of pantoate with beta-alanine in an ATP-dependent reaction via a pantoyl-adenylate intermediate. This Chlorobium phaeobacteroides (strain DSM 266 / SMG 266 / 2430) protein is Pantothenate synthetase.